Here is a 495-residue protein sequence, read N- to C-terminus: RNA-binding KH domain-containing protein PEPPER (495 aa).

KH domains are found at residues 73–140 (DCVF…MDAV), 165–234 (FSSV…LEAI), and 340–403 (QVSQ…EQLI). Residues 474–495 (GQTYGSEYRPASDVGGYSSYNL) are disordered.

As to quaternary structure, interacts with HUA1 and HEN4. Detected in roots, shoots, leaves, flowers and fruits.

The protein localises to the nucleus. In terms of biological role, regulates vegetative and gynoecium development. In concert with HUA2, antagonizes FLK by positively regulating FLC probably at transcriptional and post-transcriptional levels, and thus acts as a negative regulator of flowering. The sequence is that of RNA-binding KH domain-containing protein PEPPER from Arabidopsis thaliana (Mouse-ear cress).